A 274-amino-acid polypeptide reads, in one-letter code: UPF0758 protein RHECIAT_CH0001935 (274 aa).

Residues 1–57 form a disordered region; sequence MAKRPAATSSNDELPFATEEPVADERSFFGGRPQNPTAPNARAALPASLSGPEHYHG. The MPN domain maps to 152 to 274; the sequence is VLSSWSSVIQ…HVSLKGLKLI (123 aa). Zn(2+) is bound by residues H223, H225, and D236. Positions 223–236 match the JAMM motif motif; the sequence is HNHPSGDPTPSRAD.

Belongs to the UPF0758 family.

In Rhizobium etli (strain CIAT 652), this protein is UPF0758 protein RHECIAT_CH0001935.